The following is a 130-amino-acid chain: Fluoride-specific ion channel FluC (130 aa).

Helical transmembrane passes span 3-23 (FVFL…YFVG), 38-58 (LGTF…GHLA), 67-87 (FGIF…SYGL), and 102-122 (VSYV…GWFL). Na(+) contacts are provided by Gly77 and Thr80.

Belongs to the fluoride channel Fluc/FEX (TC 1.A.43) family.

It is found in the cell inner membrane. It catalyses the reaction fluoride(in) = fluoride(out). Its activity is regulated as follows. Na(+) is not transported, but it plays an essential structural role and its presence is essential for fluoride channel function. Functionally, fluoride-specific ion channel. Important for reducing fluoride concentration in the cell, thus reducing its toxicity. This Helicobacter pylori (strain HPAG1) protein is Fluoride-specific ion channel FluC.